The sequence spans 301 residues: MQKYDIKTFQGLILALQDYWARQGCVIIQPLDMEVGAGTFHPMTFLRSLGPEPMSSAYVQPCRRPTDGRYGENPNRLQHYYQFQVMLKPSPDNIQELYLGSLKELGFDPLVHDIRFVEDNWESPTLGAWGLGWEVWLNGMEVTQFTYFQQVGGIECKPVTGEITYGLERLAMYVQGVDSIYDLVWTDGPMGKVTYGDVFHQNEVEQSTYNFEHANVEALFRTFDECEAESKKLIENSLPLPAYEQVMKASHAFNLLDARHAISVTERQRYILRVRTLAKACAESYYQAREALGFPLCNKEA.

The protein belongs to the class-II aminoacyl-tRNA synthetase family. As to quaternary structure, tetramer of two alpha and two beta subunits.

It localises to the cytoplasm. It carries out the reaction tRNA(Gly) + glycine + ATP = glycyl-tRNA(Gly) + AMP + diphosphate. This Alteromonas mediterranea (strain DSM 17117 / CIP 110805 / LMG 28347 / Deep ecotype) protein is Glycine--tRNA ligase alpha subunit.